A 953-amino-acid chain; its full sequence is Coatomer subunit beta-1 (953 aa).

HEAT repeat units lie at residues 49–87, 93–127, 128–165, 314–351, and 393–430; these read ETLPHLFITVVRYVLPSEDHTIQKLLLLYLEIVDKRDVA, PEMILICQNLRNNLQHPNEYIRGVTLRFLCRLNEP, ELLEPLIPSILANLDHRHHFIRRHALSAISAIYRLPHG, DVMVDVVMDVLRALSSPNVDVRRKVLDLVLDLLTPRNV, and EVAGSVVHLLMDFLGDTNVAAAVDVVLFVREIIETNPK.

Oligomeric complex that consists of at least the alpha, beta, beta', gamma, delta, epsilon and zeta subunits.

The protein localises to the cytoplasm. Its subcellular location is the golgi apparatus membrane. The protein resides in the cytoplasmic vesicle. It localises to the COPI-coated vesicle membrane. In terms of biological role, the coatomer is a cytosolic protein complex that binds to dilysine motifs and reversibly associates with Golgi non-clathrin-coated vesicles, which further mediate biosynthetic protein transport from the ER, via the Golgi up to the trans Golgi network. Coatomer complex is required for budding from Golgi membranes, and is essential for the retrograde Golgi-to-ER transport of dilysine-tagged proteins. The chain is Coatomer subunit beta-1 from Oryza sativa subsp. japonica (Rice).